The primary structure comprises 507 residues: Nuclear poly(A) polymerase 3 (507 aa).

ATP is bound by residues 79 to 81, 91 to 94, Asp147, Lys208, Tyr217, and 226 to 227; these read YGS, SDID, and GV. Residues Asp92, Asp94, and Asp147 each contribute to the Mg(2+) site.

It belongs to the poly(A) polymerase family. Monomer. Forms a complex with cleavage and polyadenylation specificity factor (CPSF) subunits FIPS5 and CPSF30. Mg(2+) serves as cofactor. It depends on Mn(2+) as a cofactor. In terms of tissue distribution, expressed in leaves (mostly in petioles and tips), cotyledon, roots (tips, vascular tissue of the radicle, and throughout the root tissue excluding the elongation zone), stems, and flowers (restricted to the stigma and the pollen in mature anthers). Active in the primary and secondary root systems.

Its subcellular location is the nucleus. The catalysed reaction is RNA(n) + ATP = RNA(n)-3'-adenine ribonucleotide + diphosphate. Its function is as follows. Essential protein. Polymerase that creates the 3'-poly(A) tail of mRNA's. Also required for the endoribonucleolytic cleavage reaction at some polyadenylation sites. May acquire specificity through interaction with a cleavage and polyadenylation specificity factor (CPSF) at its C-terminus. The chain is Nuclear poly(A) polymerase 3 from Arabidopsis thaliana (Mouse-ear cress).